The sequence spans 1066 residues: Allene oxide synthase-lipoxygenase protein (1066 aa).

The interval 1-371 is allene oxide synthase; sequence MTWKNFGFEI…LKIGSLVPAG (371 aa). Residue Y353 coordinates heme. Residues 372–1066 are arachidonate 8-lipoxygenase; the sequence is QNAIYNVEVE…PERIPNGTAI (695 aa). The PLAT domain maps to 374-490; it reads AIYNVEVETG…KDMVLFPGEA (117 aa). Ca(2+)-binding residues include H387, G389, T390, D391, N416, D417, E419, D452, and D454. The region spanning 491 to 1066 is the Lipoxygenase domain; it reads TLPFNEVPAI…PERIPNGTAI (576 aa). Fe cation-binding residues include H757, H762, H943, N947, and I1066.

It in the C-terminal section; belongs to the lipoxygenase family. As to quaternary structure, dimer. Ca(2+) serves as cofactor. The cofactor is Fe cation. Heme is required as a cofactor.

It is found in the cytoplasm. The protein resides in the membrane. The catalysed reaction is (5Z,8Z,11Z,14Z)-eicosatetraenoate + O2 = (8R)-hydroperoxy-(5Z,9E,11Z,14Z)-eicosatetraenoate. It catalyses the reaction (8R)-hydroperoxy-(5Z,9E,11Z,14Z)-eicosatetraenoate = 8,9-epoxy-(5Z,9E,11Z,14Z)-eicosatetraenoate + H2O. The enzyme catalyses (5Z,8Z,11Z,14Z,17Z)-eicosapentaenoate + O2 = (8R)-hydroperoxy-(5Z,9E,11Z,14Z,17Z)-eicosapentaenoate. It carries out the reaction (4Z,7Z,10Z,13Z,16Z,19Z)-docosahexaenoate + O2 = 10-hydroperoxy-(4Z,7Z,11E,13Z,16Z,19Z)-docosahexaenoate. The catalysed reaction is (8Z,11Z,14Z)-eicosatrienoate + O2 = (8R)-hydroperoxy-(9E,11Z,14Z)-eicosatrienoate. It catalyses the reaction (8Z,11Z,14Z)-eicosatrienoate + O2 = 10-hydroperoxy-(8Z,11Z,14Z)-eicosatrienoate. The enzyme catalyses (8Z,11Z,14Z)-eicosatrienoate + O2 = 11-hydroperoxy-(8Z,12E,14Z)-eicosatrienoate. It functions in the pathway lipid metabolism; arachidonate metabolism. It participates in lipid metabolism; fatty acid metabolism. Lipoxygenase activity is stimulated by calcium, sodium, lithium and potassium ions. Calcium binding promotes interaction with membranes and thus facilitates access to substrates. In terms of biological role, bifunctional enzyme which is responsible for allene oxide biosynthesis via a two-step reaction; first the lipoxygenase reaction that converts polyunsaturated fatty acids such as arachidonate ((5Z,8Z,11Z,14Z)-eicosatetraenoate) into a (8R)-hydroperoxide intermediate ((8R)-hydroperoxy-(5Z,9E,11Z,14Z)-eicosatetraenoate) followed by the allene oxide synthase reaction that converts the hydroperoxide intermediate ((8R)-hydroperoxy-(5Z,9E,11Z,14Z)-eicosatetraenoate) into the allene oxide (8,9-epoxy-(5Z,9E,11Z,14Z)-eicosatetraenoate). Shows preference for C20 or C22 highly polyunsaturated fatty acids and no activity with C18 fatty acids in vitro. Fatty acid allene oxides are intermediates in the formation of cyclopentenones or hydrolytic products in marine systems, most notably the prostanoid-related clavulones. The chain is Allene oxide synthase-lipoxygenase protein from Plexaura homomalla (Black sea rod).